The primary structure comprises 461 residues: Bifunctional enzyme LpxC/FabZ (461 aa).

Residues 1-302 (MLKQKTLKDS…FARQMRKEIR (302 aa)) are UDP-3-O-acyl-N-acetylglucosamine deacetylase. Positions 78, 260, and 264 each coordinate Zn(2+). H287 functions as the Proton donor in the catalytic mechanism. The interval 303–461 (LHEIQAPTYD…EFMAQIVKNK (159 aa)) is 3-hydroxyacyl-[acyl-carrier-protein] dehydratase. H364 is a catalytic residue.

It in the N-terminal section; belongs to the LpxC family. In the C-terminal section; belongs to the thioester dehydratase family. Requires Zn(2+) as cofactor.

Its subcellular location is the cytoplasm. The enzyme catalyses a UDP-3-O-[(3R)-3-hydroxyacyl]-N-acetyl-alpha-D-glucosamine + H2O = a UDP-3-O-[(3R)-3-hydroxyacyl]-alpha-D-glucosamine + acetate. It catalyses the reaction a (3R)-hydroxyacyl-[ACP] = a (2E)-enoyl-[ACP] + H2O. It functions in the pathway glycolipid biosynthesis; lipid IV(A) biosynthesis; lipid IV(A) from (3R)-3-hydroxytetradecanoyl-[acyl-carrier-protein] and UDP-N-acetyl-alpha-D-glucosamine: step 2/6. Catalyzes the hydrolysis of UDP-3-O-myristoyl-N-acetylglucosamine to form UDP-3-O-myristoylglucosamine and acetate, the committed step in lipid A biosynthesis. Functionally, involved in unsaturated fatty acids biosynthesis. Catalyzes the dehydration of short chain beta-hydroxyacyl-ACPs and long chain saturated and unsaturated beta-hydroxyacyl-ACPs. This is Bifunctional enzyme LpxC/FabZ (lpxC/fabZ) from Bacteroides thetaiotaomicron (strain ATCC 29148 / DSM 2079 / JCM 5827 / CCUG 10774 / NCTC 10582 / VPI-5482 / E50).